A 234-amino-acid chain; its full sequence is HTH-type transcriptional repressor FabR (234 aa).

In terms of domain architecture, HTH tetR-type spans lysine 29–leucine 89. The H-T-H motif DNA-binding region spans serine 52–phenylalanine 71.

As to quaternary structure, homodimer.

It is found in the cytoplasm. Has been suggested to require either an unsaturated acyl carrier protein or unsaturated acyl-CoA (but not their saturated equivalents) for DNA-binding. Another group suggests that unsaturated thioesters are not essential but act instead to enhance DNA-binding. Binds the promoter region of at least fabA and fabB, but probably not yqfA. Represses the transcription of fabA and fabB, involved in unsaturated fatty acid (UFA) biosynthesis. By controlling UFA production, FabR directly influences the physical properties of the membrane bilayer. This Escherichia coli (strain K12) protein is HTH-type transcriptional repressor FabR.